A 356-amino-acid polypeptide reads, in one-letter code: MAYKLLIINPGSTSTKIGVYEGEKEILEETLRHSAEEILKYDTIFDQLDFRKEVILKVLKEKGIDINELDAVVGRGGMLKPIEGGTYEVNEAMVEDLKIGVQGPHASNLGGILSNEIAKEIGKRAFIVDPVVVDEMEDVARLSGVPELPRKSKFHALNQKAVAKRYAKEHNTSYEDVNLIVVHMGGGVSVGAHRKGRVIDVNNALDGDGPFSPERAGGVPSGELLEMCFSGKYSKEEVYKKLVGKGGFVAYANTNDARDLIKLSQEGDEKGSLIFNAFIYQIAKEIGSMAVVLDGEVNAIVLTGGIAYSDYVTNAINKKVKWIAPMVVYGGEDELLALAQGAIRVLDGVEEAKIYK.

The protein belongs to the acetokinase family.

The protein resides in the cytoplasm. The enzyme catalyses butanoate + ATP = butanoyl phosphate + ADP. This is Probable butyrate kinase from Clostridium perfringens (strain SM101 / Type A).